Consider the following 203-residue polypeptide: MSGQRVDVKVVMLGKEYVGKTSLVERYVHDRFLVGPYQNTIGAAFVAKVMCVGDRTVTLGIWDTAGSERYEAMSRIYYRGAKAAIVCYDLTDSSSFERAKFWVKELRSLEEGCQIYLCGTKSDLLEEDRRRRRVDFHDVQDYADNIKAQLFETSSKTGQSVDELFQKVAEDYVSVAAFQVMTEDKGVDLSQKANPYFYSCCHH.

Tyrosine 17 carries the post-translational modification Phosphotyrosine. 4 residues coordinate GTP: glycine 19, lysine 20, threonine 21, and threonine 40. Threonine 21, threonine 40, and aspartate 63 together coordinate Mg(2+). The tract at residues aspartate 30–phenylalanine 45 is switch I. Residues aspartate 63–glycine 80 are switch II. GTP contacts are provided by glycine 66, lysine 121, aspartate 123, and lysine 156. Phosphotyrosine is present on tyrosine 172. 2 S-geranylgeranyl cysteine lipidation sites follow: cysteine 200 and cysteine 201.

Belongs to the small GTPase superfamily. Rab family. As to quaternary structure, interacts with ZFYVE20. Does not interact with the GDP dissociation inhibitors ARHGDIA and ARHGDIB. Mg(2+) serves as cofactor. In terms of processing, prenylated; prenylation is required for RAB24 localization to autophagosomes. Isoprenylation is inefficient compared to other Rab family members. Post-translationally, phosphorylated at Tyr-17 and Tyr-172. Cytosolic pool of RAB24 is more phosphorylated than the membrane-associated pool. In terms of tissue distribution, widely expressed, with highest expression in brain.

Its subcellular location is the cytoplasm. The protein localises to the cytosol. The protein resides in the membrane. It is found in the cytoplasmic vesicle. It localises to the autophagosome membrane. Its subcellular location is the perinuclear region. The protein localises to the cytoskeleton. The protein resides in the spindle. It carries out the reaction GTP + H2O = GDP + phosphate + H(+). With respect to regulation, regulated by guanine nucleotide exchange factors (GEFs) which promote the exchange of bound GDP for free GTP. Regulated by GTPase activating proteins (GAPs) which increase the GTP hydrolysis activity. Inhibited by GDP dissociation inhibitors (GDIs). Its function is as follows. The small GTPases Rab are key regulators of intracellular membrane trafficking, from the formation of transport vesicles to their fusion with membranes. Rabs cycle between an inactive GDP-bound form and an active GTP-bound form that is able to recruit to membranes different sets of downstream effectors directly responsible for vesicle formation, movement, tethering and fusion. RAB24 is an atypical RAB protein that presents low GTPase activity and thereby exists predominantly in the GTP-bound active state. RAB24 is required for the clearance of late autophagic vacuoles under basal conditions. It is not needed for starvation-induced autophagy. Involved in the modulation of meiotic apparatus assembly and meiotic progression during oocyte maturation, possibly through regulation of kinetochore-microtubule interaction. The protein is Ras-related protein Rab-24 of Mus musculus (Mouse).